A 249-amino-acid chain; its full sequence is Pyridoxine 5'-phosphate synthase (249 aa).

Asn-7 serves as a coordination point for 3-amino-2-oxopropyl phosphate. Residue 9–10 (DH) coordinates 1-deoxy-D-xylulose 5-phosphate. Residue Arg-18 participates in 3-amino-2-oxopropyl phosphate binding. Catalysis depends on His-43, which acts as the Proton acceptor. Arg-45 and His-50 together coordinate 1-deoxy-D-xylulose 5-phosphate. Glu-70 serves as the catalytic Proton acceptor. Thr-100 serves as a coordination point for 1-deoxy-D-xylulose 5-phosphate. Catalysis depends on His-190, which acts as the Proton donor. 3-amino-2-oxopropyl phosphate contacts are provided by residues Gly-191 and 212-213 (GH).

Belongs to the PNP synthase family. In terms of assembly, homooctamer; tetramer of dimers.

The protein localises to the cytoplasm. It catalyses the reaction 3-amino-2-oxopropyl phosphate + 1-deoxy-D-xylulose 5-phosphate = pyridoxine 5'-phosphate + phosphate + 2 H2O + H(+). The protein operates within cofactor biosynthesis; pyridoxine 5'-phosphate biosynthesis; pyridoxine 5'-phosphate from D-erythrose 4-phosphate: step 5/5. Functionally, catalyzes the complicated ring closure reaction between the two acyclic compounds 1-deoxy-D-xylulose-5-phosphate (DXP) and 3-amino-2-oxopropyl phosphate (1-amino-acetone-3-phosphate or AAP) to form pyridoxine 5'-phosphate (PNP) and inorganic phosphate. The chain is Pyridoxine 5'-phosphate synthase from Synechococcus sp. (strain CC9311).